The primary structure comprises 203 residues: Proteasome subunit beta 2 (203 aa).

Positions 1–9 (MGEEVQIGA) are cleaved as a propeptide — removed in mature form; by autocatalysis. Threonine 10 acts as the Nucleophile in catalysis.

The protein belongs to the peptidase T1B family. In terms of assembly, the 20S proteasome core is composed of 14 alpha and 14 beta subunits that assemble into four stacked heptameric rings, resulting in a barrel-shaped structure. The two inner rings, each composed of seven catalytic beta subunits, are sandwiched by two outer rings, each composed of seven alpha subunits. The catalytic chamber with the active sites is on the inside of the barrel. Has a gated structure, the ends of the cylinder being occluded by the N-termini of the alpha-subunits. Is capped at one or both ends by the proteasome regulatory ATPase, PAN.

It localises to the cytoplasm. It catalyses the reaction Cleavage of peptide bonds with very broad specificity.. Its activity is regulated as follows. The formation of the proteasomal ATPase PAN-20S proteasome complex, via the docking of the C-termini of PAN into the intersubunit pockets in the alpha-rings, triggers opening of the gate for substrate entry. Interconversion between the open-gate and close-gate conformations leads to a dynamic regulation of the 20S proteasome proteolysis activity. In terms of biological role, component of the proteasome core, a large protease complex with broad specificity involved in protein degradation. In Pyrobaculum aerophilum (strain ATCC 51768 / DSM 7523 / JCM 9630 / CIP 104966 / NBRC 100827 / IM2), this protein is Proteasome subunit beta 2.